Consider the following 843-residue polypeptide: Translation initiation factor IF-2 (843 aa).

Residues 198-219 are disordered; it reads YKREEEEKKSKAKKAGGKGFKK. The span at 207 to 219 shows a compositional bias: basic residues; sequence SKAKKAGGKGFKK. Positions 345-512 constitute a tr-type G domain; sequence SRAPVVTIMG…AVLLQSEVLE (168 aa). Residues 354-361 are G1; the sequence is GHVDHGKT. GTP is bound at residue 354–361; sequence GHVDHGKT. The interval 379-383 is G2; the sequence is GITQH. The G3 stretch occupies residues 400-403; sequence DTPG. GTP is bound by residues 400 to 404 and 454 to 457; these read DTPGH and NKID. The tract at residues 454–457 is G4; the sequence is NKID. Positions 490-492 are G5; sequence SAK.

This sequence belongs to the TRAFAC class translation factor GTPase superfamily. Classic translation factor GTPase family. IF-2 subfamily.

The protein localises to the cytoplasm. Its function is as follows. One of the essential components for the initiation of protein synthesis. Protects formylmethionyl-tRNA from spontaneous hydrolysis and promotes its binding to the 30S ribosomal subunits. Also involved in the hydrolysis of GTP during the formation of the 70S ribosomal complex. In Francisella tularensis subsp. tularensis (strain WY96-3418), this protein is Translation initiation factor IF-2.